Here is a 67-residue protein sequence, read N- to C-terminus: Conotoxin mr3d (67 aa).

The N-terminal stretch at 1-19 (MSKLGILLTICLLLFPLTA) is a signal peptide. Residues 20–52 (VPLDGDQPADRPAERMQDDISSEHHPFFDPVKR) constitute a propeptide that is removed on maturation. 3 disulfide bridges follow: cysteine 53/cysteine 65, cysteine 54/cysteine 62, and cysteine 58/cysteine 66. 4-hydroxyproline; partial is present on proline 64. Cysteine 66 is modified (cysteine amide; partial).

Belongs to the conotoxin M superfamily. Has been found to be hydroxylated and amidated by Han et al. (2006), and to be unmodified by Ju et al. (2022). In terms of tissue distribution, expressed by the venom duct.

The protein localises to the secreted. In Conus marmoreus (Marble cone), this protein is Conotoxin mr3d.